The following is a 288-amino-acid chain: ATP synthase gamma chain (288 aa).

The protein belongs to the ATPase gamma chain family. As to quaternary structure, F-type ATPases have 2 components, CF(1) - the catalytic core - and CF(0) - the membrane proton channel. CF(1) has five subunits: alpha(3), beta(3), gamma(1), delta(1), epsilon(1). CF(0) has three main subunits: a, b and c.

The protein resides in the cell inner membrane. Produces ATP from ADP in the presence of a proton gradient across the membrane. The gamma chain is believed to be important in regulating ATPase activity and the flow of protons through the CF(0) complex. In Rickettsia typhi (strain ATCC VR-144 / Wilmington), this protein is ATP synthase gamma chain.